The primary structure comprises 165 residues: Transmembrane protein 128 (165 aa).

4 helical membrane-spanning segments follow: residues 49-69 (NIHSGFWILASIVVTYYVDFF), 81-101 (WFLFGSALLLVSVSIAFYCIV), 119-139 (LIPITTATFIVAGICFNVALW), and 144-164 (FFTPVLLFTQFMGVVMLTSLL).

The protein resides in the membrane. This Bos taurus (Bovine) protein is Transmembrane protein 128 (TMEM128).